A 632-amino-acid polypeptide reads, in one-letter code: Biosynthetic arginine decarboxylase (632 aa).

Lys101 is subject to N6-(pyridoxal phosphate)lysine. 281-291 (FDVGGGLGVDY) provides a ligand contact to substrate.

It belongs to the Orn/Lys/Arg decarboxylase class-II family. SpeA subfamily. Requires Mg(2+) as cofactor. It depends on pyridoxal 5'-phosphate as a cofactor.

It catalyses the reaction L-arginine + H(+) = agmatine + CO2. The protein operates within amine and polyamine biosynthesis; agmatine biosynthesis; agmatine from L-arginine: step 1/1. Its function is as follows. Catalyzes the biosynthesis of agmatine from arginine. The polypeptide is Biosynthetic arginine decarboxylase (Salmonella agona (strain SL483)).